Consider the following 759-residue polypeptide: MQNWETTATTNYEQHNAWYNSMFAANIKQEPGHHLDGNSVASSPRQSPIPSTNHLEQFLKQQQQQQHQQQPMDTLCAMTPSPSQNDQNSLQHYDASLQQQLLQQQQYQQHFQAAQQQHHHHHHLMGGFNPLTPPGLPNPMQHFYGGNLRPSPQPTPTSASTVAPVAVATGSSEKLQALTPPMDVTPPKSPAKSSQSNIEPEKEHDQMSNSSEDMKYMAESEDDDTNIRMPIYNSHGKMKNYKCKTCGVVAITKVDFWAHTRTHMKPDKILQCPKCPFVTEFKHHLEYHIRKHKNQKPFQCDKCSYTCVNKSMLNSHRKSHSSVYQYRCADCDYATKYCHSFKLHLRKYGHKPGMVLDEDGTPNPSLVIDVYGTRRGPKSKNGGPIASGGSGSGSRKPNVAAVAPQQQQSQPAQPATSQLSAALQGFPLVQSNSAPPAASPVLPLPASPAKSVASVEQTPSLPSPANLLPPLASLLQQNRNMAFFPYWNLNLQMLAAQQQAAVLAQLSPRMREQLQQQNQQQSDNEEEEQDDEYERKSVDSAMDLSQGTPVKEDDQHQQQQQPQQPLAMNLKVEEEATPLMSSSNASRRKGRVLKLDTLLQLRSEAMTSPEQLKVPSTPMPTASSPIAGRKPMPEDHCSGTSSADESMETAHVPQANTSASSTASSSGNSSNASSNGNSSSNSSSNGTSSAAAAPASGTPAAAGAIYECKYCDIFFKDAVLYTIHMGYHSCDDVFKCNMCGEKCDGPVGLFVHMARNAHS.

2 disordered regions span residues glutamate 30–serine 51 and serine 171–lysine 215. The segment covering serine 39–serine 51 has biased composition (polar residues). Residue threonine 179 is modified to Phosphothreonine. 4 positions are modified to phosphoserine: serine 189, serine 208, serine 210, and serine 211. A compositionally biased stretch (basic and acidic residues) spans glutamate 199–lysine 215. 4 C2H2-type zinc fingers span residues tyrosine 241–histidine 263, leucine 270–histidine 292, phenylalanine 298–histidine 320, and tyrosine 326–histidine 350. Disordered regions lie at residues leucine 366–leucine 419, glutamine 513–proline 565, and methionine 606–serine 696. 2 stretches are compositionally biased toward low complexity: residues valine 399 to leucine 419 and glutamine 513 to serine 522. The segment covering aspartate 523–glutamate 532 has biased composition (acidic residues). Phosphoserine is present on residues serine 537 and serine 540. The span at alanine 655–serine 696 shows a compositional bias: low complexity. 2 C2H2-type zinc fingers span residues tyrosine 706–histidine 728 and phenylalanine 734–histidine 758.

Belongs to the hunchback C2H2-type zinc-finger protein family.

Its subcellular location is the nucleus. Functionally, gap class segmentation protein that controls development of head structures. This chain is Protein hunchback, found in Drosophila yakuba (Fruit fly).